The following is a 201-amino-acid chain: Pyridoxine/pyridoxamine 5'-phosphate oxidase (201 aa).

Residues 49-54, 64-65, Lys71, and Gln93 contribute to the FMN site; these read RMVLLK and YT. Lys54 is a substrate binding site. Tyr111, Arg115, and Ser119 together coordinate substrate. FMN is bound by residues 128–129 and Trp172; that span reads QS. 178 to 180 lines the substrate pocket; the sequence is RLH. Arg182 contacts FMN.

Belongs to the pyridoxamine 5'-phosphate oxidase family. In terms of assembly, homodimer. Requires FMN as cofactor.

It carries out the reaction pyridoxamine 5'-phosphate + O2 + H2O = pyridoxal 5'-phosphate + H2O2 + NH4(+). It catalyses the reaction pyridoxine 5'-phosphate + O2 = pyridoxal 5'-phosphate + H2O2. It participates in cofactor metabolism; pyridoxal 5'-phosphate salvage; pyridoxal 5'-phosphate from pyridoxamine 5'-phosphate: step 1/1. It functions in the pathway cofactor metabolism; pyridoxal 5'-phosphate salvage; pyridoxal 5'-phosphate from pyridoxine 5'-phosphate: step 1/1. Functionally, catalyzes the oxidation of either pyridoxine 5'-phosphate (PNP) or pyridoxamine 5'-phosphate (PMP) into pyridoxal 5'-phosphate (PLP). The chain is Pyridoxine/pyridoxamine 5'-phosphate oxidase from Ruegeria sp. (strain TM1040) (Silicibacter sp.).